Here is a 2618-residue protein sequence, read N- to C-terminus: Mediator of RNA polymerase II transcription subunit 13 (2618 aa).

3 stretches are compositionally biased toward low complexity: residues 232–255 (FAAA…VPNP), 509–519 (TPASGTGSLSA), and 532–543 (DSKQLVQQQIQQ). 10 disordered regions span residues 232–279 (FAAA…AAPP), 509–543 (TPAS…QIQQ), 569–731 (GNTP…SGGP), 916–957 (LNIK…AEGL), 970–995 (TSSN…NGGC), 1036–1055 (TKMF…SSPC), 1268–1384 (PRTP…TGVV), 1521–1557 (ASAS…ITGY), 1614–1633 (SRKN…LDKI), and 1985–2060 (KTLL…GETK). Phosphothreonine is present on residues threonine 571 and threonine 575. 3 stretches are compositionally biased toward polar residues: residues 581–590 (STYSRNSLGG), 634–643 (APTSVSNLQQ), and 669–681 (SITA…QTPS). The segment covering 692–706 (AGGGPAGGQGLGTGP) has biased composition (gly residues). Residues 711–723 (AQQPATPTAATSA) are compositionally biased toward low complexity. Residues 939-949 (NSSGGGSGSGG) show a composition bias toward gly residues. The span at 1272–1295 (LTPSTVPQPLSSGGSQYLLNQLNC) shows a compositional bias: polar residues. Gly residues-rich tracts occupy residues 1375-1384 (GLGGGATGVV) and 1528-1538 (AGSGHGHGPNG). The span at 1539–1553 (GSNSSSCTPPSSNPH) shows a compositional bias: low complexity. The span at 1614-1629 (SRKNQNKQGPGETSSA) shows a compositional bias: polar residues. A compositionally biased stretch (low complexity) spans 1993–2014 (GSGNSHSKGGSSCSSNSSSVSG). Phosphoserine is present on residues serine 2472 and serine 2475.

The protein belongs to the Mediator complex subunit 13 family. In terms of assembly, component of the Cdk8 module of the Mediator complex, composed of CycC, Cdk8, kto and skd.

The protein localises to the nucleus. Its function is as follows. Component of the Mediator complex, a coactivator involved in the regulated transcription of nearly all RNA polymerase II-dependent genes. Mediator functions as a bridge to convey information from gene-specific regulatory proteins to the basal RNA polymerase II transcription machinery. Mediator is recruited to promoters by direct interactions with regulatory proteins and serves as a scaffold for the assembly of a functional preinitiation complex with RNA polymerase II and the general transcription factors. Required for leg and eye development and macrochaete specification or differentiation. Negatively regulates sex comb development. Required for activated transcription of the MtnB and MtnD genes. This chain is Mediator of RNA polymerase II transcription subunit 13 (skd), found in Drosophila melanogaster (Fruit fly).